Reading from the N-terminus, the 351-residue chain is UDP-3-O-acylglucosamine N-acyltransferase (351 aa).

Residue His-240 is the Proton acceptor of the active site.

It belongs to the transferase hexapeptide repeat family. LpxD subfamily. In terms of assembly, homotrimer.

It carries out the reaction a UDP-3-O-[(3R)-3-hydroxyacyl]-alpha-D-glucosamine + a (3R)-hydroxyacyl-[ACP] = a UDP-2-N,3-O-bis[(3R)-3-hydroxyacyl]-alpha-D-glucosamine + holo-[ACP] + H(+). The protein operates within bacterial outer membrane biogenesis; LPS lipid A biosynthesis. In terms of biological role, catalyzes the N-acylation of UDP-3-O-acylglucosamine using 3-hydroxyacyl-ACP as the acyl donor. Is involved in the biosynthesis of lipid A, a phosphorylated glycolipid that anchors the lipopolysaccharide to the outer membrane of the cell. The protein is UDP-3-O-acylglucosamine N-acyltransferase of Pseudomonas entomophila (strain L48).